The following is a 145-amino-acid chain: Chaperonin GroEL (145 aa).

This sequence belongs to the chaperonin (HSP60) family. Forms a cylinder of 14 subunits composed of two heptameric rings stacked back-to-back. Interacts with the co-chaperonin GroES.

It localises to the cytoplasm. It carries out the reaction ATP + H2O + a folded polypeptide = ADP + phosphate + an unfolded polypeptide.. Functionally, together with its co-chaperonin GroES, plays an essential role in assisting protein folding. The GroEL-GroES system forms a nano-cage that allows encapsulation of the non-native substrate proteins and provides a physical environment optimized to promote and accelerate protein folding. The protein is Chaperonin GroEL of Thermus thermophilus.